The sequence spans 584 residues: Endoribonuclease YBEY, chloroplastic (584 aa).

A chloroplast-targeting transit peptide spans 1–50; that stretch reads MLSRVCPTLRYNRIWSAHAREMPRATLLLLQPNFFHSSPKTALVNRLDVT. Residues histidine 240, histidine 244, and histidine 250 each contribute to the Zn(2+) site.

The protein belongs to the endoribonuclease YbeY family. Zn(2+) is required as a cofactor.

It is found in the plastid. Its subcellular location is the chloroplast stroma. Functionally, endoribonuclease required for chloroplast ribosomal RNA (rRNA) processing and essential for normal growth and development. May be involved in maturation of both the 5' and 3' ends of 16S, 23S, and 4.5S rRNAs. Cleaves chloroplast rRNAs, mRNAs and tRNAs in vitro. The protein is Endoribonuclease YBEY, chloroplastic of Arabidopsis thaliana (Mouse-ear cress).